Consider the following 293-residue polypeptide: RNA-binding Raly-like protein (293 aa).

The RRM domain maps to 21–92; that stretch reads SRVFIGNLNT…QPLDINMAGE (72 aa). Disordered stretches follow at residues 159–195 and 245–293; these read PRAAVTTTRRGKGVFSMKGGSRSAVSGSSSSGSKLKS and QDEC…LQIK. Positions 176 to 192 are enriched in low complexity; sequence KGGSRSAVSGSSSSGSK. The stretch at 192-254 forms a coiled coil; sequence KLKSDELQTI…QDECVSENAD (63 aa). Positions 259 to 284 are enriched in acidic residues; it reads EPAEGAPDADGEELTDGVEEDFDEDG.

Belongs to the RRM HNRPC family. RALY subfamily.

The chain is RNA-binding Raly-like protein (RALYL) from Bos taurus (Bovine).